The following is a 942-amino-acid chain: UvrABC system protein A (942 aa).

32–39 provides a ligand contact to ATP; that stretch reads GLSGSGKS. The C4-type zinc finger occupies 251-278; it reads CPVCGFTVPELEPRLFSFNAPFGSCPTC. ABC transporter domains follow at residues 308–589 and 609–937; these read WNPI…KKSI and GNGR…HYLK. 641–648 is an ATP binding site; that stretch reads GVSGSGKS. The segment at 740-766 adopts a C4-type zinc-finger fold; the sequence is CEACSGDGIIKIEMHFLPDVYVPCEVC.

It belongs to the ABC transporter superfamily. UvrA family. In terms of assembly, forms a heterotetramer with UvrB during the search for lesions.

It is found in the cytoplasm. Its function is as follows. The UvrABC repair system catalyzes the recognition and processing of DNA lesions. UvrA is an ATPase and a DNA-binding protein. A damage recognition complex composed of 2 UvrA and 2 UvrB subunits scans DNA for abnormalities. When the presence of a lesion has been verified by UvrB, the UvrA molecules dissociate. In Streptococcus pyogenes serotype M6 (strain ATCC BAA-946 / MGAS10394), this protein is UvrABC system protein A.